The primary structure comprises 204 residues: Proteasome subunit beta 2 (204 aa).

The propeptide at 1–6 (MEVLPG) is removed in mature form; by autocatalysis. The active-site Nucleophile is the Thr7.

Belongs to the peptidase T1B family. In terms of assembly, the 20S proteasome core is composed of 14 alpha and 14 beta subunits that assemble into four stacked heptameric rings, resulting in a barrel-shaped structure. The two inner rings, each composed of seven catalytic beta subunits, are sandwiched by two outer rings, each composed of seven alpha subunits. The catalytic chamber with the active sites is on the inside of the barrel. Has a gated structure, the ends of the cylinder being occluded by the N-termini of the alpha-subunits. Is capped at one or both ends by the proteasome regulatory ATPase, PAN.

The protein localises to the cytoplasm. It catalyses the reaction Cleavage of peptide bonds with very broad specificity.. Its activity is regulated as follows. The formation of the proteasomal ATPase PAN-20S proteasome complex, via the docking of the C-termini of PAN into the intersubunit pockets in the alpha-rings, triggers opening of the gate for substrate entry. Interconversion between the open-gate and close-gate conformations leads to a dynamic regulation of the 20S proteasome proteolysis activity. Its function is as follows. Component of the proteasome core, a large protease complex with broad specificity involved in protein degradation. This is Proteasome subunit beta 2 from Thermofilum pendens (strain DSM 2475 / Hrk 5).